A 261-amino-acid polypeptide reads, in one-letter code: Cytochrome c oxidase subunit 3 (261 aa).

Residues 1 to 15 (MTHQTHAYHMVNPSP) are Mitochondrial matrix-facing. A helical membrane pass occupies residues 16 to 34 (WPLTGALSALLMTSGLIMW). Topologically, residues 35-40 (FHFNST) are mitochondrial intermembrane. A helical membrane pass occupies residues 41-66 (TLLMLGLTTNMLTMYQWWRDVIREST). At 67–72 (FQGHHT) the chain is on the mitochondrial matrix side. A helical membrane pass occupies residues 73-105 (PNVQKGLRYGMILFIISEVLFFTGFFWAFYHSS). Residues 106–128 (LAPTPELGGCWPPTGIHPLNPLE) lie on the Mitochondrial intermembrane side of the membrane. A helical membrane pass occupies residues 129–152 (VPLLNTSVLLASGVSITWAHHSLM). Topologically, residues 153-155 (EGN) are mitochondrial matrix. Residues 156-183 (RNHMLQALFITIALGVYFTLLQASEYYE) form a helical membrane-spanning segment. Topologically, residues 184–190 (APFTISD) are mitochondrial intermembrane. Residues 191–223 (GVYGSTFFVATGFHGLHVIIGSTFLIVCFFRQL) traverse the membrane as a helical segment. The Mitochondrial matrix segment spans residues 224 to 232 (KFHFTSNHH). Residues 233 to 256 (FGFEAAAWYWHFVDVVWLFLYVSI) traverse the membrane as a helical segment. Over 257-261 (YWWGS) the chain is Mitochondrial intermembrane.

This sequence belongs to the cytochrome c oxidase subunit 3 family. Component of the cytochrome c oxidase (complex IV, CIV), a multisubunit enzyme composed of 14 subunits. The complex is composed of a catalytic core of 3 subunits MT-CO1, MT-CO2 and MT-CO3, encoded in the mitochondrial DNA, and 11 supernumerary subunits COX4I, COX5A, COX5B, COX6A, COX6B, COX6C, COX7A, COX7B, COX7C, COX8 and NDUFA4, which are encoded in the nuclear genome. The complex exists as a monomer or a dimer and forms supercomplexes (SCs) in the inner mitochondrial membrane with NADH-ubiquinone oxidoreductase (complex I, CI) and ubiquinol-cytochrome c oxidoreductase (cytochrome b-c1 complex, complex III, CIII), resulting in different assemblies (supercomplex SCI(1)III(2)IV(1) and megacomplex MCI(2)III(2)IV(2)).

Its subcellular location is the mitochondrion inner membrane. It carries out the reaction 4 Fe(II)-[cytochrome c] + O2 + 8 H(+)(in) = 4 Fe(III)-[cytochrome c] + 2 H2O + 4 H(+)(out). In terms of biological role, component of the cytochrome c oxidase, the last enzyme in the mitochondrial electron transport chain which drives oxidative phosphorylation. The respiratory chain contains 3 multisubunit complexes succinate dehydrogenase (complex II, CII), ubiquinol-cytochrome c oxidoreductase (cytochrome b-c1 complex, complex III, CIII) and cytochrome c oxidase (complex IV, CIV), that cooperate to transfer electrons derived from NADH and succinate to molecular oxygen, creating an electrochemical gradient over the inner membrane that drives transmembrane transport and the ATP synthase. Cytochrome c oxidase is the component of the respiratory chain that catalyzes the reduction of oxygen to water. Electrons originating from reduced cytochrome c in the intermembrane space (IMS) are transferred via the dinuclear copper A center (CU(A)) of subunit 2 and heme A of subunit 1 to the active site in subunit 1, a binuclear center (BNC) formed by heme A3 and copper B (CU(B)). The BNC reduces molecular oxygen to 2 water molecules using 4 electrons from cytochrome c in the IMS and 4 protons from the mitochondrial matrix. In Antilope cervicapra (Blackbuck), this protein is Cytochrome c oxidase subunit 3 (MT-CO3).